Consider the following 649-residue polypeptide: Threonine--tRNA ligase (649 aa).

One can recognise a TGS domain in the interval 1-60; it reads MHVTLPDGKQLDLQPGATALDAAKAIGPRLAQDALGATANGELTDLMTPLSDGASITLIT. The interval 248–544 is catalytic; it reads DHRKLGKELE…LIEHYAGDFP (297 aa). Residues C341, H392, and H521 each contribute to the Zn(2+) site.

It belongs to the class-II aminoacyl-tRNA synthetase family. Homodimer. It depends on Zn(2+) as a cofactor.

Its subcellular location is the cytoplasm. It catalyses the reaction tRNA(Thr) + L-threonine + ATP = L-threonyl-tRNA(Thr) + AMP + diphosphate + H(+). In terms of biological role, catalyzes the attachment of threonine to tRNA(Thr) in a two-step reaction: L-threonine is first activated by ATP to form Thr-AMP and then transferred to the acceptor end of tRNA(Thr). Also edits incorrectly charged L-seryl-tRNA(Thr). The sequence is that of Threonine--tRNA ligase from Deinococcus radiodurans (strain ATCC 13939 / DSM 20539 / JCM 16871 / CCUG 27074 / LMG 4051 / NBRC 15346 / NCIMB 9279 / VKM B-1422 / R1).